A 756-amino-acid polypeptide reads, in one-letter code: Catalase-peroxidase (756 aa).

Residues Met-1–Ala-26 form the signal peptide. Positions Trp-126–Tyr-248 form a cross-link, tryptophyl-tyrosyl-methioninium (Trp-Tyr) (with M-274). His-127 functions as the Proton acceptor in the catalytic mechanism. The segment at residues Tyr-248 to Met-274 is a cross-link (tryptophyl-tyrosyl-methioninium (Tyr-Met) (with W-126)). His-289 contacts heme b.

It belongs to the peroxidase family. Peroxidase/catalase subfamily. As to quaternary structure, homodimer or homotetramer. Heme b is required as a cofactor. Post-translationally, formation of the three residue Trp-Tyr-Met cross-link is important for the catalase, but not the peroxidase activity of the enzyme.

The enzyme catalyses H2O2 + AH2 = A + 2 H2O. It carries out the reaction 2 H2O2 = O2 + 2 H2O. Its function is as follows. Bifunctional enzyme with both catalase and broad-spectrum peroxidase activity. This Shewanella loihica (strain ATCC BAA-1088 / PV-4) protein is Catalase-peroxidase.